A 1005-amino-acid polypeptide reads, in one-letter code: Myosin IE heavy chain (1005 aa).

Residues 8 to 693 form the Myosin motor domain; the sequence is EGVPDFVLLN…TLFYFEEKRE (686 aa). 101–108 lines the ATP pocket; the sequence is GESGAGKT. Residues 539–562 form a disordered region; that stretch reads SDPLVQGLFPPTRPEDSKKRPETA. Residues 551 to 560 are compositionally biased toward basic and acidic residues; sequence RPEDSKKRPE. An actin-binding region spans residues 556-630; the sequence is KKRPETAGSQ…RAGFAGRIEY (75 aa). IQ domains lie at 694 to 722 and 716 to 745; these read LEMPRIVTLIQKTWRGYRARSKWNQRKAA and WNQRKAAIKIQLFYRSYRYKKWFRELHRAF. In terms of domain architecture, TH1 spans 810-1004; it reads KKKWDFRRHF…KGNQATIQFK (195 aa).

Belongs to the TRAFAC class myosin-kinesin ATPase superfamily. Myosin family. In terms of assembly, myosin I heavy chain is single-headed. Dimer of a heavy and a light chain. Inability to self-assemble into filaments.

Myosin is a protein that binds to actin and has ATPase activity that is activated by actin. May play a role in moving membranes relative to actin. This is Myosin IE heavy chain (myoE) from Dictyostelium discoideum (Social amoeba).